An 833-amino-acid polypeptide reads, in one-letter code: MLISKSKMFKTFWILTSIVLLASATVDISKLQEFEEYQKFTNESLLWAPYRSNCYFGMRPRYVHESPLIMGIMWFNSLSQDGLHSLRHFATPQDKLQKYGWEVYDPRIGGKEVFIDEKNNLNLTVYFVKSKNGENWSVRVQGEPLDPKRPSTASVVLYFSQNGGEIDGKSSLAMIGHDGPNDMKFFGYSKELGEYHLTVKDNFGHYFKNPEYETMEVAPGSDCSKTSHLSLQIPDKEVWKARDVFQSLVSDSIRDILEKEETKQRPADLIPSVLTIRNLYNFNPGNFHYIQKTFDLTKKDGFQFDITYNKLGTTQSISTREQVTELITWSLNEINARFDKQFSFGEGPDSIESVEVKRRFALETLSNLLGGIGYFYGNQLIDRETEFDESQFTEIKLLNAKEEGPFELFTSVPSRGFFPRGFYWDEGFHLLQIMEYDFDLAFEILASWFEMIEDDSGWIAREIILGNEARSKVPQEFQVQNPNIANPPTLLLAFSEMLSRAIENIGDFNSDSYHQVMFNSRTAKFMTNNLEANPGLLTEYAKKIYPKLLKHYNWFRKSQTGLIDEYEEILEDEGIWDKIHKNEVYRWVGRTFTHCLPSGMDDYPRAQPPDVAELNVDALAWVGVMTRSMKQIAHVLKLTQDEQRYAQIEQEVVENLDLLHWSENDNCYCDISIDPEDDEIREFVCHEGYVSVLPFALKLIPKNSPKLEKVVALMSDPEKIFSDYGLLSLSRQDDYFGKDENYWRGPIWMNINYLCLDAMRYYYPEVILDVAGEASNAKKLYQSLKINLSNNIYKVWEEQGYCYENYSPIDGHGTGAEHFTGWTALVVNILGRF.

Residues 1-10 are Cytoplasmic-facing; the sequence is MLISKSKMFK. The helical; Signal-anchor for type II membrane protein transmembrane segment at 11–28 threads the bilayer; the sequence is TFWILTSIVLLASATVDI. Over 29–833 the chain is Lumenal; sequence SKLQEFEEYQ…ALVVNILGRF (805 aa). 2 residues coordinate substrate: Asn-42 and Asn-122. 3 N-linked (GlcNAc...) asparagine glycosylation sites follow: Asn-42, Asn-122, and Asn-135. Glu-143 provides a ligand contact to substrate. The Proton donor role is filled by Asp-601. A disulfide bridge connects residues Cys-669 and Cys-685. An N-linked (GlcNAc...) asparagine glycan is attached at Asn-787. The active-site Proton acceptor is the Glu-804.

The protein belongs to the glycosyl hydrolase 63 family. Post-translationally, N-glycosylated.

Its subcellular location is the endoplasmic reticulum membrane. It carries out the reaction N(4)-(alpha-D-Glc-(1-&gt;2)-alpha-D-Glc-(1-&gt;3)-alpha-D-Glc-(1-&gt;3)-alpha-D-Man-(1-&gt;2)-alpha-D-Man-(1-&gt;2)-alpha-D-Man-(1-&gt;3)-[alpha-D-Man-(1-&gt;2)-alpha-D-Man-(1-&gt;3)-[alpha-D-Man-(1-&gt;2)-alpha-D-Man-(1-&gt;6)]-alpha-D-Man-(1-&gt;6)]-beta-D-Man-(1-&gt;4)-beta-D-GlcNAc-(1-&gt;4)-beta-D-GlcNAc)-L-asparaginyl-[protein] + H2O = N(4)-(alpha-D-Glc-(1-&gt;3)-alpha-D-Glc-(1-&gt;3)-alpha-D-Man-(1-&gt;2)-alpha-D-Man-(1-&gt;2)-alpha-D-Man-(1-&gt;3)-[alpha-D-Man-(1-&gt;2)-alpha-D-Man-(1-&gt;3)-[alpha-D-Man-(1-&gt;2)-alpha-D-Man-(1-&gt;6)]-alpha-D-Man-(1-&gt;6)]-beta-D-Man-(1-&gt;4)-beta-D-GlcNAc-(1-&gt;4)-beta-D-GlcNAc)-L-asparaginyl-[protein] + beta-D-glucose. Its pathway is glycan metabolism; N-glycan degradation. Its activity is regulated as follows. Miglitol is an effective inhibitor at 1 mM. Cleaves the distal alpha 1,2-linked glucose residue from the Glc(3)Man(9)GlcNAc(2) oligosaccharide precursor highly specifically. Seems to play a role in beta-1,6-glucan synthesis. The sequence is that of Mannosyl-oligosaccharide glucosidase (CWH41) from Saccharomyces cerevisiae (strain ATCC 204508 / S288c) (Baker's yeast).